Reading from the N-terminus, the 732-residue chain is DNA ligase (732 aa).

NAD(+) is bound by residues 47–51 (DAEYD), 96–97 (SI), and glutamate 133. Lysine 135 functions as the N6-AMP-lysine intermediate in the catalytic mechanism. Positions 156, 196, 317, and 341 each coordinate NAD(+). The Zn(2+) site is built by cysteine 470, cysteine 473, cysteine 488, and cysteine 494. One can recognise a BRCT domain in the interval 653 to 732 (RATLPLAGKT…AGMLALLQGR (80 aa)).

The protein belongs to the NAD-dependent DNA ligase family. LigA subfamily. Mg(2+) serves as cofactor. It depends on Mn(2+) as a cofactor.

The catalysed reaction is NAD(+) + (deoxyribonucleotide)n-3'-hydroxyl + 5'-phospho-(deoxyribonucleotide)m = (deoxyribonucleotide)n+m + AMP + beta-nicotinamide D-nucleotide.. In terms of biological role, DNA ligase that catalyzes the formation of phosphodiester linkages between 5'-phosphoryl and 3'-hydroxyl groups in double-stranded DNA using NAD as a coenzyme and as the energy source for the reaction. It is essential for DNA replication and repair of damaged DNA. This chain is DNA ligase, found in Paracidovorax citrulli (strain AAC00-1) (Acidovorax citrulli).